A 444-amino-acid chain; its full sequence is Xaa-Pro dipeptidase (444 aa).

The Mn(2+) site is built by Asp247, Asp258, His340, Glu385, and Glu424.

The protein belongs to the peptidase M24B family. Bacterial-type prolidase subfamily. The cofactor is Mn(2+).

It catalyses the reaction Xaa-L-Pro dipeptide + H2O = an L-alpha-amino acid + L-proline. In terms of biological role, splits dipeptides with a prolyl residue in the C-terminal position. This chain is Xaa-Pro dipeptidase, found in Proteus mirabilis (strain HI4320).